We begin with the raw amino-acid sequence, 725 residues long: Endoglucanase G (725 aa).

The first 35 residues, 1-35, serve as a signal peptide directing secretion; it reads MLKTKRKLTKAIGVALSISILSSLVSFIPQTNTYA. Asp-93 serves as the catalytic Nucleophile. Residues His-408, Asp-446, and Glu-455 contribute to the active site. The 162-residue stretch at 489-650 folds into the CBM3 domain; sequence ITNDEVIIKA…GVKVFGNEPA (162 aa). The region spanning 658–724 is the Dockerin domain; that stretch reads PEILYGDVNS…LLGTITQLPQ (67 aa).

Belongs to the glycosyl hydrolase 9 (cellulase E) family.

It carries out the reaction Endohydrolysis of (1-&gt;4)-beta-D-glucosidic linkages in cellulose, lichenin and cereal beta-D-glucans.. It participates in glycan metabolism; cellulose degradation. Functionally, the biological conversion of cellulose to glucose generally requires three types of hydrolytic enzymes: (1) Endoglucanases which cut internal beta-1,4-glucosidic bonds; (2) Exocellobiohydrolases that cut the disaccharide cellobiose from the non-reducing end of the cellulose polymer chain; (3) Beta-1,4-glucosidases which hydrolyze the cellobiose and other short cello-oligosaccharides to glucose. In Ruminiclostridium cellulolyticum (strain ATCC 35319 / DSM 5812 / JCM 6584 / H10) (Clostridium cellulolyticum), this protein is Endoglucanase G (celCCG).